Reading from the N-terminus, the 192-residue chain is dTTP/UTP pyrophosphatase (192 aa).

Asp-72 serves as the catalytic Proton acceptor.

This sequence belongs to the Maf family. YhdE subfamily. Requires a divalent metal cation as cofactor.

It is found in the cytoplasm. The catalysed reaction is dTTP + H2O = dTMP + diphosphate + H(+). It carries out the reaction UTP + H2O = UMP + diphosphate + H(+). In terms of biological role, nucleoside triphosphate pyrophosphatase that hydrolyzes dTTP and UTP. May have a dual role in cell division arrest and in preventing the incorporation of modified nucleotides into cellular nucleic acids. The sequence is that of dTTP/UTP pyrophosphatase from Hydrogenovibrio crunogenus (strain DSM 25203 / XCL-2) (Thiomicrospira crunogena).